Reading from the N-terminus, the 399-residue chain is MAHITINQYLQQVYEAIDTRDGASCAELVSFKHPHVANPRLQMASPEEKCQQVLEPPYDEMFAAHLRCTYAVGNHDFIEAYKCQTVIVQSFLRAFQAHKEENWALPVMYAVALDLRIFANNADQQLVKKGKSKVGDMLEKAAELLMSCFRVCASDTRAGIEDSKKWGMLFLVNQLFKIYFKINKLHLCKPLIRAIDSSNLKDDYSTAQRITYKYYVGRKAMFDSDFKQAEEYLSFAFEHCHRSSQKNKRMILIYLLPVKMLLGHMPTIELLRKYHLMQFSEVTKAVSEGNLLLLNEALAKHETFFIRCGIFLILEKLKIITYRNLFKKVYLLLKTHQLSLDAFLVALKFMHVEDVDIDEVQCILANLIYMGHIKGYISHQHQKLVVSKQNPFPPLSTVC.

Position 2 is an N-acetylalanine (Ala-2). Residue Ser-45 is modified to Phosphoserine. A PCI domain is found at 210–391 (ITYKYYVGRK…QKLVVSKQNP (182 aa)).

This sequence belongs to the CSN12 family. In terms of assembly, component of the nuclear pore complex (NPC)-associated TREX-2 complex (transcription and export complex 2), composed of at least GANP, 2 copies of ENY2, PCID2, SEM1/DSS1, and either centrin CETN2 or centrin CETN3. The TREX-2 complex also associates with ALYREF/ALY and with the nucleoporin NUP153. Interacts with BRCA2. Interacts with SRCAP chromatin remodeling complex component ZNHIT1; the interaction results in inhibition of SRCAP complex activity, preventing the deposition of histone variant H2AZ1/H2A.Z to lymphoid fate regulator genes and restricting lymphoid lineage commitment. As to expression, highly expressed in bone marrow and haematopoietic progenitor cells but is almost undetectable in mature blood cells.

It is found in the cytoplasm. It localises to the nucleus. Its subcellular location is the nuclear pore complex. Functionally, required for B-cell survival through the regulation of the expression of cell-cycle checkpoint MAD2L1 protein during B cell differentiation. As a component of the TREX-2 complex, involved in the export of mRNAs to the cytoplasm through the nuclear pores. Binds and stabilizes BRCA2 and is thus involved in the control of R-loop-associated DNA damage and transcription-associated genomic instability. Blocks the activity of the SRCAP chromatin remodeling complex by interacting with SRCAP complex member ZNHIT1 and inhibiting its interaction with the complex. This prevents the deposition of histone variant H2AZ1/H2A.Z at the nucleosomes of key lymphoid fate regulator genes which suppresses their expression and restricts lymphoid lineage commitment. The sequence is that of PCI domain-containing protein 2 (Pcid2) from Mus musculus (Mouse).